A 225-amino-acid chain; its full sequence is Polyadenylate-binding protein 2 (225 aa).

The segment covering 1 to 36 (MADEDISLNEDQLLESMEETNGEQETEIVTETEEEG) has biased composition (acidic residues). The tract at residues 1 to 42 (MADEDISLNEDQLLESMEETNGEQETEIVTETEEEGSMQIDP) is disordered. The stretch at 14–74 (LESMEETNGE…QSEVDKQMAG (61 aa)) forms a coiled coil. The 78-residue stretch at 96 to 173 (RSVYVGNVDY…RQIKVMSKRT (78 aa)) folds into the RRM domain.

The protein resides in the nucleus. The protein localises to the cytoplasm. Functionally, involved in the 3'-end formation of mRNA precursors (pre-mRNA) by the addition of a poly(A) tail of 200-250 nt to the upstream cleavage product. Stimulates poly(A) polymerase (PAPOLA) conferring processivity on the poly(A) tail elongation reaction and also controls the poly(A) tail length. Increases the affinity of poly(A) polymerase for RNA. Binds to poly(A) and to poly(G) with high affinity. May protect the poly(A) tail from degradation. This chain is Polyadenylate-binding protein 2, found in Drosophila pseudoobscura pseudoobscura (Fruit fly).